The primary structure comprises 353 residues: Photosystem II D2 protein (353 aa).

Thr-2 is modified (N-acetylthreonine). Thr-2 carries the post-translational modification Phosphothreonine. A helical transmembrane segment spans residues 41-61; it reads CAYFALGGWFTGTTFVTSWYT. His-118 serves as a coordination point for chlorophyll a. A helical membrane pass occupies residues 125–141; sequence GFMLRQFELARSVQLRP. 2 residues coordinate pheophytin a: Gln-130 and Asn-143. Residues 153–166 traverse the membrane as a helical segment; that stretch reads VFVSVFLIYPLGQS. A chlorophyll a-binding site is contributed by His-198. A helical transmembrane segment spans residues 208 to 228; it reads AALLCAIHGATVENTLFEDGD. A plastoquinone is bound by residues His-215 and Phe-262. His-215 lines the Fe cation pocket. His-269 contacts Fe cation. A helical transmembrane segment spans residues 279–295; sequence GLWMSAIGVVGLALNLR.

The protein belongs to the reaction center PufL/M/PsbA/D family. As to quaternary structure, PSII is composed of 1 copy each of membrane proteins PsbA, PsbB, PsbC, PsbD, PsbE, PsbF, PsbH, PsbI, PsbJ, PsbK, PsbL, PsbM, PsbT, PsbX, PsbY, PsbZ, Psb30/Ycf12, at least 3 peripheral proteins of the oxygen-evolving complex and a large number of cofactors. It forms dimeric complexes. Requires The D1/D2 heterodimer binds P680, chlorophylls that are the primary electron donor of PSII, and subsequent electron acceptors. It shares a non-heme iron and each subunit binds pheophytin, quinone, additional chlorophylls, carotenoids and lipids. There is also a Cl(-1) ion associated with D1 and D2, which is required for oxygen evolution. The PSII complex binds additional chlorophylls, carotenoids and specific lipids. as cofactor.

The protein resides in the plastid. It localises to the chloroplast thylakoid membrane. The enzyme catalyses 2 a plastoquinone + 4 hnu + 2 H2O = 2 a plastoquinol + O2. Its function is as follows. Photosystem II (PSII) is a light-driven water:plastoquinone oxidoreductase that uses light energy to abstract electrons from H(2)O, generating O(2) and a proton gradient subsequently used for ATP formation. It consists of a core antenna complex that captures photons, and an electron transfer chain that converts photonic excitation into a charge separation. The D1/D2 (PsbA/PsbD) reaction center heterodimer binds P680, the primary electron donor of PSII as well as several subsequent electron acceptors. D2 is needed for assembly of a stable PSII complex. The protein is Photosystem II D2 protein of Pinus thunbergii (Japanese black pine).